We begin with the raw amino-acid sequence, 661 residues long: UvrABC system protein B (661 aa).

The Helicase ATP-binding domain occupies 26–413; sequence KGINEGRKHQ…TPEMVEQIIR (388 aa). 39 to 46 lines the ATP pocket; the sequence is GATGTGKT. The Beta-hairpin motif lies at 92 to 115; it reads YYDYYQPEAYVPQTDTFIEKDASI. One can recognise a Helicase C-terminal domain in the interval 430 to 596; that stretch reads QIDDLIGEIQ…TINKKIRDVI (167 aa). One can recognise a UVR domain in the interval 625-660; the sequence is EKVIAQMESDMKEAAKALDFERAAELRDLLLELKSE.

This sequence belongs to the UvrB family. Forms a heterotetramer with UvrA during the search for lesions. Interacts with UvrC in an incision complex.

Its subcellular location is the cytoplasm. The UvrABC repair system catalyzes the recognition and processing of DNA lesions. A damage recognition complex composed of 2 UvrA and 2 UvrB subunits scans DNA for abnormalities. Upon binding of the UvrA(2)B(2) complex to a putative damaged site, the DNA wraps around one UvrB monomer. DNA wrap is dependent on ATP binding by UvrB and probably causes local melting of the DNA helix, facilitating insertion of UvrB beta-hairpin between the DNA strands. Then UvrB probes one DNA strand for the presence of a lesion. If a lesion is found the UvrA subunits dissociate and the UvrB-DNA preincision complex is formed. This complex is subsequently bound by UvrC and the second UvrB is released. If no lesion is found, the DNA wraps around the other UvrB subunit that will check the other stand for damage. This is UvrABC system protein B from Bacillus licheniformis (strain ATCC 14580 / DSM 13 / JCM 2505 / CCUG 7422 / NBRC 12200 / NCIMB 9375 / NCTC 10341 / NRRL NRS-1264 / Gibson 46).